The sequence spans 438 residues: MYHDYASKLLADYRSDPPLWESDLPRHNRYSDNILNSRYCGNKNGAAPVYNEYTNSPGKAEKGLQLSDLRNFSFMLNPQHKNIGYGDAQDLEPYSSIPKNKLFNHFKNYRPAFSTHTENLIKRNVVRTEKKTFPQVSGLKDTQKNCLTQPSSLPSLKNPKNSSVPSTRFSEHTKFFSYEDLPKLRTKGTIKHEQHLGDQMPGQYYNGYIPHQDVYNILCLAHKLPASVEKEIAGRGIPLGNPHVKPNIEQELIKSTSTYTGVPMLGPLPPKDSQHGREYQEFSANRHMLQVSNILHSVFANHSIKPQILEDIPVLNAQLASIKPVSPFLNKAYQTHYMENIVTLVPRFKSIANYSSPIPNYSKRNNGQAEYFDTSKQTISRHNNYIPKYTGGIGDSRLDSTFPKDFNASSVPLTSAEKDHSLRGDNSACCISSISPSL.

Positions 134–167 are disordered; sequence PQVSGLKDTQKNCLTQPSSLPSLKNPKNSSVPST. Positions 144-167 are enriched in polar residues; sequence KNCLTQPSSLPSLKNPKNSSVPST.

It belongs to the asfivirus p49 structural protein family.

It localises to the virion. In terms of biological role, together with the penton and the other minor capsid proteins (M1249L, p17), forms a complicated network immediately below the outer capsid shell, stabilizing the whole capsid. Plays an essential role in the formation of infectious virus particles. Especially required for the formation of the capsid vertices. During virion assembly, associates with the membrane and probably mediates the docking of the penton complex to the inner membrane, where it recruits the capsomers to form the penton core. This chain is Minor capsid protein p49, found in Ornithodoros (relapsing fever ticks).